The sequence spans 188 residues: Putative manganese efflux pump MntP (188 aa).

Transmembrane regions (helical) follow at residues 2–22 (IMGN…AFAV), 39–59 (LITG…GFLL), 67–87 (ITAI…LNMI), 107–127 (IILS…FAFL), 129–149 (VDIV…SFLG), and 166–186 (LAGG…HLGF).

Belongs to the MntP (TC 9.B.29) family.

Its subcellular location is the cell membrane. In terms of biological role, probably functions as a manganese efflux pump. This chain is Putative manganese efflux pump MntP, found in Desulfitobacterium hafniense (strain Y51).